Consider the following 334-residue polypeptide: Proline-serine-threonine phosphatase-interacting protein 2 (334 aa).

The 261-residue stretch at 4–264 (SLFKGNFWST…SLETCSIEKD (261 aa)) folds into the F-BAR domain. A coiled-coil region spans residues 66–163 (GQSEINTLKR…AEQAVHRSAN (98 aa)). The tract at residues 288–322 (YSPQRNAAPPGKTTGPNPARRGPLPVPKRIPDDPD) is disordered. Phosphotyrosine occurs at positions 323 and 329.

Phosphorylated on tyrosine. Expressed in macrophage-containing tissues, including bone marrow, spleen, liver, kidney, intestine and brain.

The protein localises to the cytoplasm. It localises to the membrane. Binds to F-actin. May be involved in regulation of the actin cytoskeleton. This Mus musculus (Mouse) protein is Proline-serine-threonine phosphatase-interacting protein 2 (Pstpip2).